A 323-amino-acid polypeptide reads, in one-letter code: Fructokinase-1 (323 aa).

This sequence belongs to the carbohydrate kinase PfkB family. In terms of tissue distribution, expressed in stems, at higher levels in roots, and hardly detectable in leaves.

It catalyses the reaction D-fructose + ATP = D-fructose 6-phosphate + ADP + H(+). It functions in the pathway glycan biosynthesis; starch biosynthesis. Its activity is regulated as follows. Inhibited at high fructose. May play an important role in maintaining the flux of carbon towards starch formation in endosperm. May also be involved in a sugar-sensing pathway. The chain is Fructokinase-1 (FRK1) from Zea mays (Maize).